We begin with the raw amino-acid sequence, 95 residues long: UPF0473 protein GWCH70_2487 (95 aa).

The protein belongs to the UPF0473 family.

This Geobacillus sp. (strain WCH70) protein is UPF0473 protein GWCH70_2487.